We begin with the raw amino-acid sequence, 576 residues long: Adenine deaminase 2 (576 aa).

This sequence belongs to the metallo-dependent hydrolases superfamily. Adenine deaminase family. Mn(2+) is required as a cofactor.

The catalysed reaction is adenine + H2O + H(+) = hypoxanthine + NH4(+). The chain is Adenine deaminase 2 from Desulfotalea psychrophila (strain LSv54 / DSM 12343).